The sequence spans 173 residues: Alpha-crystallin B chain (173 aa).

Met1 carries the post-translational modification N-acetylmethionine. The region spanning 54–162 (RLPSWIESGL…PERSIPITRE (109 aa)) is the sHSP domain. The Zn(2+) site is built by His81, His102, Glu104, and His109.

Belongs to the small heat shock protein (HSP20) family. Heteromer composed of three CRYAA and one CRYAB subunits. Aggregates with homologous proteins, including the small heat shock protein HSPB1, to form large heteromeric complexes. Inter-subunit bridging via zinc ions enhances stability, which is crucial as there is no protein turn over in the lens.

Its function is as follows. May contribute to the transparency and refractive index of the lens. This is Alpha-crystallin B chain (CRYAB) from Aquarana catesbeiana (American bullfrog).